Here is a 1836-residue protein sequence, read N- to C-terminus: U3 small nucleolar RNA-associated protein 10 (1836 aa).

One copy of the HEAT 1 repeat lies at 245 to 283 (EVVGFLLLPSKYETLRNIDVDTRLTAYSIIAVLASIIPI). The interval 453–473 (SNSSVRDSDDVEFDAGEEDNN) is disordered. Over residues 461 to 473 (DDVEFDAGEEDNN) the composition is skewed to acidic residues. 2 HEAT repeats span residues 585–623 (PLDLYLLIPIFLLGVYDETRVVRAGFVQLLRFIKETTTS) and 813–850 (VENRIKIVNKLIDLLNNDEPIESDPMDTLQTLKLDQDL). Residues 863–883 (QIPEQGPAKRRRRSSSSTKQA) are disordered. Transmembrane regions (helical) follow at residues 998–1018 (LLLVIAELASLAPEIVLHSVM) and 1085–1105 (LFTYLIRTLGSDLSLHVLLFL). HEAT repeat units lie at residues 1333 to 1372 (ESVLEKLLPVLLHGIKKNVDIELEQAYLDTFAIIVNKFGA), 1749 to 1787 (ETLVHGLIKYISNEKEDNSSSTKIWTIRALKSIFQKMGE), and 1790 to 1828 (LTYLPTLIPYIAELLEDDDQAVEMEVRSGLVRVIENVLG).

Belongs to the HEATR1/UTP10 family. In terms of assembly, component of the ribosomal small subunit (SSU) processome.

It localises to the nucleus. Its subcellular location is the nucleolus. The protein localises to the membrane. Its function is as follows. Involved in nucleolar processing of pre-18S ribosomal RNA. Involved in ribosome biosynthesis. In Scheffersomyces stipitis (strain ATCC 58785 / CBS 6054 / NBRC 10063 / NRRL Y-11545) (Yeast), this protein is U3 small nucleolar RNA-associated protein 10.